The following is a 152-amino-acid chain: UPF0266 membrane protein YobD (152 aa).

The next 3 helical transmembrane spans lie at 6–26 (LLLI…QFIM), 45–65 (VDSV…VTSH), and 67–87 (AQMT…IFWI).

This sequence belongs to the UPF0266 family.

The protein resides in the cell inner membrane. In Salmonella paratyphi C (strain RKS4594), this protein is UPF0266 membrane protein YobD.